A 179-amino-acid polypeptide reads, in one-letter code: Pyridoxal 5'-phosphate synthase subunit PdxT (179 aa).

48 to 50 (GES) contributes to the L-glutamine binding site. Cysteine 79 serves as the catalytic Nucleophile. L-glutamine is bound by residues arginine 101 and 127–128 (IR). Active-site charge relay system residues include histidine 163 and glutamate 165.

Belongs to the glutaminase PdxT/SNO family. As to quaternary structure, in the presence of PdxS, forms a dodecamer of heterodimers. Only shows activity in the heterodimer.

The catalysed reaction is aldehydo-D-ribose 5-phosphate + D-glyceraldehyde 3-phosphate + L-glutamine = pyridoxal 5'-phosphate + L-glutamate + phosphate + 3 H2O + H(+). It catalyses the reaction L-glutamine + H2O = L-glutamate + NH4(+). The protein operates within cofactor biosynthesis; pyridoxal 5'-phosphate biosynthesis. Its function is as follows. Catalyzes the hydrolysis of glutamine to glutamate and ammonia as part of the biosynthesis of pyridoxal 5'-phosphate. The resulting ammonia molecule is channeled to the active site of PdxS. This chain is Pyridoxal 5'-phosphate synthase subunit PdxT, found in Francisella philomiragia subsp. philomiragia (strain ATCC 25017 / CCUG 19701 / FSC 153 / O#319-036).